The chain runs to 329 residues: Cyclin-dependent kinase 7 (329 aa).

The Protein kinase domain occupies 4–287; sequence NEKLDFLGEG…ASQALRTKYF (284 aa). ATP is bound by residues 10–18 and K33; that span reads LGEGQFATV. Catalysis depends on D129, which acts as the Proton acceptor. The residue at position 156 (S156) is a Phosphoserine; by CDK1 and CDK2. T162 carries the post-translational modification Phosphothreonine. Positions 309-329 are disordered; the sequence is LKEQSNPAMATKRKRAEALEQ. At S313 the chain carries Phosphoserine.

The protein belongs to the protein kinase superfamily. CMGC Ser/Thr protein kinase family. CDC2/CDKX subfamily. Associates primarily with cyclin-H (CCNH) and MAT1 to form the CAK complex. CAK can further associate with the core-TFIIH to form the TFIIH basal transcription factor; this complex is sensitive to UV light. The CAK complex binds to p53/TP53 in response to DNA damage. Interacts with CDK2, SF1/NR5A1, PUF60 and PRKCI. Interacts with HINT1. Phosphorylation of Ser-156 during mitosis inactivates the enzyme. Phosphorylation of Thr-162 is required for activity. Phosphorylated at Ser-156 and Thr-162 by CDK2.

It is found in the nucleus. The protein resides in the cytoplasm. The protein localises to the perinuclear region. The enzyme catalyses L-seryl-[protein] + ATP = O-phospho-L-seryl-[protein] + ADP + H(+). It carries out the reaction L-threonyl-[protein] + ATP = O-phospho-L-threonyl-[protein] + ADP + H(+). It catalyses the reaction [DNA-directed RNA polymerase] + ATP = phospho-[DNA-directed RNA polymerase] + ADP + H(+). Phosphorylation at Thr-162 is required for enzymatic activity. The association of p53/TP53 to the CAK complex in response to DNA damage reduces kinase activity toward CDK2 and RNA polymerase II repetitive C-terminal domain (CTD), thus stopping cell cycle progression. In terms of biological role, serine/threonine kinase involved in cell cycle control and in RNA polymerase II-mediated RNA transcription. Cyclin-dependent kinases (CDKs) are activated by the binding to a cyclin and mediate the progression through the cell cycle. Each different complex controls a specific transition between 2 subsequent phases in the cell cycle. Required for both activation and complex formation of CDK1/cyclin-B during G2-M transition, and for activation of CDK2/cyclins during G1-S transition (but not complex formation). CDK7 is the catalytic subunit of the CDK-activating kinase (CAK) complex. Phosphorylates SPT5/SUPT5H, SF1/NR5A1, POLR2A, p53/TP53, CDK1, CDK2, CDK4, CDK6 and CDK11B/CDK11. Initiates transcription by RNA polymerase II by mediating phosphorylation of POLR2A at 'Ser-5' of the repetitive C-terminal domain (CTD) when POLR2A is in complex with DNA, promoting dissociation from DNA and initiation. CAK activates the cyclin-associated kinases CDK1, CDK2, CDK4 and CDK6 by threonine phosphorylation, thus regulating cell cycle progression. CAK complexed to the core-TFIIH basal transcription factor activates RNA polymerase II by serine phosphorylation of the CTD of POLR2A, allowing its escape from the promoter and elongation of the transcripts. Its expression and activity are constant throughout the cell cycle. Upon DNA damage, triggers p53/TP53 activation by phosphorylation, but is inactivated in turn by p53/TP53; this feedback loop may lead to an arrest of the cell cycle and of the transcription, helping in cell recovery, or to apoptosis. Required for DNA-bound peptides-mediated transcription and cellular growth inhibition. The protein is Cyclin-dependent kinase 7 (Cdk7) of Rattus norvegicus (Rat).